Consider the following 236-residue polypeptide: Chorionic somatomammotropin hormone (236 aa).

A signal peptide spans 1–36 (MAPASSHREHQWTCNLVRGSRLLLLLVVSNLILCQG). 3 cysteine pairs are disulfide-bonded: C44-C51, C97-C212, and C229-C234.

Belongs to the somatotropin/prolactin family.

It is found in the secreted. In Ovis aries (Sheep), this protein is Chorionic somatomammotropin hormone (CSH).